The sequence spans 171 residues: MSALSLSITKVSETFSEIYASRAQYLSGFKSVGEFLDVRRISRPRNFSEAQSRISFNFSRFSSNYLAIIAMLVIYALIRNPLLLIVIGIGVGGVYGIRKLQGADLQLSHRVISNQNLYVILACVLIPLGLFASPIETIIWLVGASCVCVFGHAAFFEPPVESAFETVEQQV.

3 consecutive transmembrane segments (helical) span residues 67 to 87, 119 to 139, and 140 to 160; these read AIIA…LIVI, VILA…ETII, and WLVG…EPPV.

Belongs to the PRA1 family.

Its subcellular location is the membrane. This is PRA1-like protein from Schizosaccharomyces pombe (strain 972 / ATCC 24843) (Fission yeast).